The primary structure comprises 116 residues: Ribulose bisphosphate carboxylase small subunit 1 (116 aa).

Belongs to the RuBisCO small chain family. In terms of assembly, heterohexadecamer of 8 large and 8 small subunits.

It localises to the cytoplasm. RuBisCO catalyzes two reactions: the carboxylation of D-ribulose 1,5-bisphosphate, the primary event in carbon dioxide fixation, as well as the oxidative fragmentation of the pentose substrate. Both reactions occur simultaneously and in competition at the same active site. Although the small subunit is not catalytic it is essential for maximal activity. Functionally, can replace the endogenous type I ccbS gene in H.neapolitanus, reconstituting RuBisCO with about 10% of normal activity; the active enzyme is targeted to carboxysomes. The chain is Ribulose bisphosphate carboxylase small subunit 1 from Hydrogenovibrio crunogenus (strain DSM 25203 / XCL-2) (Thiomicrospira crunogena).